A 755-amino-acid chain; its full sequence is LIM domain and actin-binding protein 1 (755 aa).

The residue at position 1 (Met1) is an N-acetylmethionine. Ser15 is subject to Phosphoserine. The span at 43 to 56 shows a compositional bias: basic and acidic residues; the sequence is KAAEEANMERKKNN. The disordered stretch occupies residues 43–151; that stretch reads KAAEEANMER…YPRSEDSHDF (109 aa). The span at 88–97 shows a compositional bias: polar residues; that stretch reads DSLPNSSSDG. A Phosphoserine modification is found at Ser132. The short motif at 164 to 166 is the Required for interaction with NPC1L1 element; it reads CLG. 2 stretches are compositionally biased toward basic and acidic residues: residues 168–177 and 199–208; these read SRHEAEKPEM and MMFEKGEHSQ. Residues 168 to 226 form a disordered region; the sequence is SRHEAEKPEMSENTETSGKIEKYNVPLNRLKMMFEKGEHSQNKSPWTQGRNAGGRRLSE. Phosphoserine occurs at positions 225, 230, and 242. Residues 241–379 are disordered; that stretch reads LSSSAFNSEK…ESSPSKTAKK (139 aa). The span at 249 to 258 shows a compositional bias: basic and acidic residues; sequence EKNESKRNLE. Phosphoserine is present on Ser263. Basic and acidic residues predominate over residues 292–305; sequence KPSESKTHKWEQKE. A compositionally biased stretch (polar residues) spans 342-354; it reads CNSQGRSEAQQPI. Ser348, Ser360, Ser367, and Ser372 each carry phosphoserine. Over residues 363 to 375 the composition is skewed to polar residues; that stretch reads ARTSSLPESSPSK. Residues 386–446 enclose the LIM zinc-binding domain; the sequence is ESCVECQKTV…KPHFNQLFKS (61 aa). Residue Lys437 is modified to N6-succinyllysine. Disordered regions lie at residues 468 to 493 and 505 to 714; these read ENEE…GVED and SMEA…DTTT. At Ser488 the chain carries Phosphoserine. The required for interaction with MYO5B stretch occupies residues 491–511; sequence VEDAPIAKVGVLAASMEAKAS. Composition is skewed to basic and acidic residues over residues 512 to 526 and 555 to 566; these read SQRE…ETKK and WPPEDEVCKTEA. Over residues 599–611 the composition is skewed to low complexity; it reads SSVKSPKPLSPSL. Phosphoserine occurs at positions 600, 603, 608, and 616. Basic and acidic residues-rich tracts occupy residues 638-653 and 662-673; these read RPSR…RWQS and EAPRGRDGRSFE. Phosphoserine is present on residues Ser697, Ser722, and Ser737.

Interacts with NPC1L1; bridges NPC1L1 with MYO5B. Interacts with MYO5B; bridges MYO5B with NPC1L1. Interacts with PXN; this complex stabilizes actin dynamics. Interacts with F-actin and G-actin. Interacts with LUZP1 (via C-terminus); both proteins restrict ciliation and may work together to regulate this process. Binds RAB40B (GTP-bound); interaction influences LIMA1 subcellular localization in lamellipodia during cell migration. Phosphorylation of the C-terminal region by MAPK1/MAPK3 reduces its association with F-actin and contributes to actin filament reorganization and enhanced cell motility. Post-translationally, ubiquitinated by the ECS(RAB40B) complex leading to its degradation. As to expression, expressed throughout the kidney, including renal cortex, medulla, and glomeruli. Expressed in glomeruli, tubular epithelial cells, and extraglomerular vascular endothelial cells (at protein level).

It localises to the cytoplasm. The protein resides in the cell junction. The protein localises to the focal adhesion. Its subcellular location is the cytoskeleton. It is found in the stress fiber. It localises to the cell membrane. The protein resides in the cell projection. The protein localises to the ruffle. Its subcellular location is the lamellipodium. In terms of biological role, actin-binding protein involved in actin cytoskeleton regulation and dynamics. Increases the number and size of actin stress fibers and inhibits membrane ruffling. Inhibits actin filament depolymerization. Bundles actin filaments, delays filament nucleation and reduces formation of branched filaments. Acts as a negative regulator of primary cilium formation. Plays a role in cholesterol homeostasis. Influences plasma cholesterol levels through regulation of intestinal cholesterol absorption. May act as a scaffold protein by regulating NPC1L1 transportation, an essential protein for cholesterol absorption, to the plasma membrane by recruiting MYO5B to NPC1L1, and thus facilitates cholesterol uptake. This Rattus norvegicus (Rat) protein is LIM domain and actin-binding protein 1.